A 107-amino-acid chain; its full sequence is Putative regulatory protein BCG9842_A0044 (107 aa).

This sequence belongs to the RemA family.

This Bacillus cereus (strain G9842) protein is Putative regulatory protein BCG9842_A0044.